Reading from the N-terminus, the 506-residue chain is Lysine--tRNA ligase (506 aa).

The Mg(2+) site is built by glutamate 416 and glutamate 423.

It belongs to the class-II aminoacyl-tRNA synthetase family. Homodimer. Mg(2+) is required as a cofactor.

The protein resides in the cytoplasm. It carries out the reaction tRNA(Lys) + L-lysine + ATP = L-lysyl-tRNA(Lys) + AMP + diphosphate. In Sodalis glossinidius (strain morsitans), this protein is Lysine--tRNA ligase.